The sequence spans 188 residues: HTH-type transcriptional regulator LmrA (188 aa).

The HTH tetR-type domain occupies 4–64 (GDSREKILSA…IEAVNEMKEY (61 aa)). The segment at residues 27–46 (GLNQIIKESGAPKGSLYYHF) is a DNA-binding region (H-T-H motif).

Its function is as follows. Acts as a repressor of the lincomycin-resistance (lmrAB) and yxaGH operons. The chain is HTH-type transcriptional regulator LmrA (lmrA) from Bacillus subtilis (strain 168).